A 349-amino-acid polypeptide reads, in one-letter code: UDP-galactose/UDP-glucose transporter 4 (349 aa).

8 helical membrane-spanning segments follow: residues 23–43, 56–76, 115–135, 140–160, 167–187, 205–225, 248–268, and 293–313; these read WQQFLICSSGFFFGYLVNGIC, GWYFTFAQGLVYIALIYMYGF, IMFKSTKVLPVMVMGAFIPGL, PVHEYISAMLLVIGLILFTLA, NFSIIGVMMISGALIMDAFLG, MLFCSTVVGLPFLLAPMILTG, AMATFIGQVSVLSLIALFGAA, and LTEQHGTGLLLIFMGIILKMV. The disordered stretch occupies residues 316–349; it reads PNPNPKSSGSGQTPGKLERVKFEKEDDEESRPLV. Residues 340 to 349 are compositionally biased toward acidic residues; that stretch reads EDDEESRPLV.

The protein belongs to the nucleotide-sugar transporter family. UDP-galactose:UMP antiporter (TC 2.A.7.11) subfamily.

The protein resides in the membrane. In terms of biological role, sugar transporter involved in the transport of nucleotide-sugars from cytoplasm into the Golgi and/or the endoplasmic reticulum. This is UDP-galactose/UDP-glucose transporter 4 from Arabidopsis thaliana (Mouse-ear cress).